The chain runs to 451 residues: KNR4/SMI1 homolog 1 (451 aa).

Over residues 410–422 (ENQIAGGSDNAKN) the composition is skewed to polar residues. The tract at residues 410-451 (ENQIAGGSDNAKNQVKLGETSDTKQDDTSKIASTVSTSDEDE) is disordered. Residues 428-438 (ETSDTKQDDTS) show a composition bias toward basic and acidic residues. The segment covering 439 to 451 (KIASTVSTSDEDE) has biased composition (polar residues).

This sequence belongs to the KNR4/SMI1 family.

In Debaryomyces hansenii (strain ATCC 36239 / CBS 767 / BCRC 21394 / JCM 1990 / NBRC 0083 / IGC 2968) (Yeast), this protein is KNR4/SMI1 homolog 1.